The sequence spans 860 residues: Leucine--tRNA ligase (860 aa).

The short motif at Pro42–His52 is the 'HIGH' region element. Positions Lys619–Ser623 match the 'KMSKS' region motif. Residue Lys622 participates in ATP binding.

The protein belongs to the class-I aminoacyl-tRNA synthetase family.

The protein localises to the cytoplasm. The enzyme catalyses tRNA(Leu) + L-leucine + ATP = L-leucyl-tRNA(Leu) + AMP + diphosphate. This chain is Leucine--tRNA ligase, found in Mannheimia succiniciproducens (strain KCTC 0769BP / MBEL55E).